A 471-amino-acid polypeptide reads, in one-letter code: Glutamate--tRNA ligase (471 aa).

The short motif at 9 to 19 is the 'HIGH' region element; the sequence is PSPTGYLHVGG. Zn(2+) contacts are provided by Cys98, Cys100, Cys125, and His127. A 'KMSKS' region motif is present at residues 237–241; it reads KLSKR. Lys240 contributes to the ATP binding site.

The protein belongs to the class-I aminoacyl-tRNA synthetase family. Glutamate--tRNA ligase type 1 subfamily. Monomer. Zn(2+) is required as a cofactor.

It is found in the cytoplasm. The catalysed reaction is tRNA(Glu) + L-glutamate + ATP = L-glutamyl-tRNA(Glu) + AMP + diphosphate. Functionally, catalyzes the attachment of glutamate to tRNA(Glu) in a two-step reaction: glutamate is first activated by ATP to form Glu-AMP and then transferred to the acceptor end of tRNA(Glu). The polypeptide is Glutamate--tRNA ligase (Salmonella arizonae (strain ATCC BAA-731 / CDC346-86 / RSK2980)).